The sequence spans 295 residues: Small ribosomal subunit protein uS2 (295 aa).

The protein belongs to the universal ribosomal protein uS2 family. In terms of assembly, component of the small ribosomal subunit. Mature ribosomes consist of a small (40S) and a large (60S) subunit. The 40S subunit contains about 33 different proteins and 1 molecule of RNA (18S). The 60S subunit contains about 49 different proteins and 3 molecules of RNA (25S, 5.8S and 5S). Interacts with RPS21.

The protein localises to the cytoplasm. Its function is as follows. Required for the assembly and/or stability of the 40S ribosomal subunit. Required for the processing of the 20S rRNA-precursor to mature 18S rRNA in a late step of the maturation of 40S ribosomal subunits. This chain is Small ribosomal subunit protein uS2, found in Paracoccidioides brasiliensis (strain Pb18).